We begin with the raw amino-acid sequence, 435 residues long: ATP-dependent protease ATPase subunit HslU (435 aa).

ATP is bound by residues isoleucine 18, 60 to 65 (GVGKTE), aspartate 248, glutamate 313, and arginine 385.

It belongs to the ClpX chaperone family. HslU subfamily. A double ring-shaped homohexamer of HslV is capped on each side by a ring-shaped HslU homohexamer. The assembly of the HslU/HslV complex is dependent on binding of ATP.

It localises to the cytoplasm. In terms of biological role, ATPase subunit of a proteasome-like degradation complex; this subunit has chaperone activity. The binding of ATP and its subsequent hydrolysis by HslU are essential for unfolding of protein substrates subsequently hydrolyzed by HslV. HslU recognizes the N-terminal part of its protein substrates and unfolds these before they are guided to HslV for hydrolysis. The sequence is that of ATP-dependent protease ATPase subunit HslU from Allorhizobium ampelinum (strain ATCC BAA-846 / DSM 112012 / S4) (Agrobacterium vitis (strain S4)).